The following is an 872-amino-acid chain: Bifunctional heparan sulfate N-deacetylase/N-sulfotransferase 4 (872 aa).

At 1-13 (MNLILKFRRSFRT) the chain is on the cytoplasmic side. Residues 14–34 (LIVLLATFCLVSILISAYFLY) traverse the membrane as a helical; Signal-anchor for type II membrane protein segment. The Lumenal portion of the chain corresponds to 35–872 (SGYKQEMTLI…WLRQELQKVR (838 aa)). Positions 36 to 588 (GYKQEMTLIE…KRHKDIWSRE (553 aa)) are heparan sulfate N-deacetylase 4. N-linked (GlcNAc...) asparagine glycosylation is found at asparagine 226, asparagine 341, and asparagine 391. Residues 589-872 (KTCDHLPKFL…WLRQELQKVR (284 aa)) are heparan sulfate N-sulfotransferase 4. Catalysis depends on lysine 604, which acts as the For sulfotransferase activity. A 3'-phosphoadenylyl sulfate-binding site is contributed by 604–608 (KTGTT). The N-linked (GlcNAc...) asparagine glycan is linked to asparagine 657. 3'-phosphoadenylyl sulfate is bound at residue serine 702. N-linked (GlcNAc...) asparagine glycosylation occurs at asparagine 793. Cysteine 808 and cysteine 818 are joined by a disulfide. Residue 823–827 (KGRKY) participates in 3'-phosphoadenylyl sulfate binding.

It belongs to the sulfotransferase 1 family. NDST subfamily. As to quaternary structure, monomer. In terms of tissue distribution, expressed at low level in brain and throughout embryogenesis. Not expressed in other tissues.

It localises to the golgi apparatus membrane. It carries out the reaction alpha-D-glucosaminyl-[heparan sulfate](n) + 3'-phosphoadenylyl sulfate = N-sulfo-alpha-D-glucosaminyl-[heparan sulfate](n) + adenosine 3',5'-bisphosphate + 2 H(+). It functions in the pathway glycan metabolism; heparan sulfate biosynthesis. The protein operates within glycan metabolism; heparin biosynthesis. Its function is as follows. Essential bifunctional enzyme that catalyzes both the N-deacetylation and the N-sulfation of glucosamine (GlcNAc) of the glycosaminoglycan in heparan sulfate. Modifies the GlcNAc-GlcA disaccharide repeating sugar backbone to make N-sulfated heparosan, a prerequisite substrate for later modifications in heparin biosynthesis. Has low deacetylase activity but high sulfotransferase activity. The sequence is that of Bifunctional heparan sulfate N-deacetylase/N-sulfotransferase 4 (Ndst4) from Mus musculus (Mouse).